Reading from the N-terminus, the 143-residue chain is Large ribosomal subunit protein uL15 (143 aa).

The segment at M1–G52 is disordered. Gly residues predominate over residues R21–S31.

It belongs to the universal ribosomal protein uL15 family. As to quaternary structure, part of the 50S ribosomal subunit.

Functionally, binds to the 23S rRNA. This is Large ribosomal subunit protein uL15 from Janthinobacterium sp. (strain Marseille) (Minibacterium massiliensis).